Consider the following 204-residue polypeptide: MATKVYIVYYSMYGHVEKLAEEIRKGAASVEGVEAKLWQVPETLHEEALSKMSAPPKSESPIITPNELAEADGFVFGFPTRFGMMAAQFKAFLDATGGLWRAQALAGKPAGIFYSTGSQGGGQETTALTAITQLVHHGMLFVPIGYTFGAGMFEMENVKGGSPYGAGTFAGDGSRQPTELELQQAFHQGQYIASITKKLKGSTA.

A Flavodoxin-like domain is found at 5 to 192 (VYIVYYSMYG…QQAFHQGQYI (188 aa)). Residues 11-15 (SMYGH), 112-165 (IFYS…SPYG), and His136 contribute to the FMN site. Tyr13 provides a ligand contact to NAD(+).

The protein belongs to the WrbA family. It depends on FMN as a cofactor.

Its subcellular location is the cell membrane. The catalysed reaction is a quinone + NADH + H(+) = a quinol + NAD(+). It catalyses the reaction a quinone + NADPH + H(+) = a quinol + NADP(+). Catalyzes the transfer of electrons from NADH and NADPH to several quinones in vitro. May act as detoxification enzyme, and protect against auxin-induced oxidative stress. The protein is NAD(P)H dehydrogenase (quinone) FQR1 of Arabidopsis thaliana (Mouse-ear cress).